A 377-amino-acid polypeptide reads, in one-letter code: 5-hydroxytryptamine receptor 1D (377 aa).

A disordered region spans residues 1–23 (MSPLNQSAEGLPQEASNRSLNAT). Over 1–38 (MSPLNQSAEGLPQEASNRSLNATETSEAWDPRTLQALK) the chain is Extracellular. Asparagine 5, asparagine 17, and asparagine 21 each carry an N-linked (GlcNAc...) asparagine glycan. Residues 39-64 (ISLAVVLSVITLATVLSNAFVLTTIL) traverse the membrane as a helical segment. The Cytoplasmic segment spans residues 65–75 (LTRKLHTPANY). A helical transmembrane segment spans residues 76–97 (LIGSLATTDLLVSILVMPISIA). Residues 98–109 (YTITHTWNFGQI) lie on the Extracellular side of the membrane. A helical transmembrane segment spans residues 110–134 (LCDIWLSSDITCCTASILHLCVIAL). A disulfide bridge links cysteine 111 with cysteine 188. Serotonin is bound by residues aspartate 118 and cysteine 122. A DRY motif; important for ligand-induced conformation changes motif is present at residues 135 to 137 (DRY). Topologically, residues 135 to 154 (DRYWAITDALEYSKRRTAGH) are cytoplasmic. The helical transmembrane segment at 155–176 (AATMIAIVWAISICISIPPLFW) threads the bilayer. The Extracellular segment spans residues 177-194 (RQAKAQEEMSDCLVNTSQ). The helical transmembrane segment at 195 to 218 (ISYTIYSTCGAFYIPSVLLIILYG) threads the bilayer. The Cytoplasmic segment spans residues 219-300 (RIYRAARNRI…ISAARERKAT (82 aa)). A helical membrane pass occupies residues 301 to 326 (KILGIILGAFIICWLPFFVVSLVLPI). Serotonin is bound at residue serine 321. At 327 to 335 (CRDSCWIHP) the chain is on the extracellular side. Residues 336-359 (ALFDFFTWLGYLNSLINPIIYTVF) traverse the membrane as a helical segment. An NPxxY motif; important for ligand-induced conformation changes and signaling motif is present at residues 352–356 (NPIIY). Residues 360-377 (NEEFRQAFQKIVPFRKAS) lie on the Cytoplasmic side of the membrane.

It belongs to the G-protein coupled receptor 1 family. As to quaternary structure, homodimer. Heterodimer with HTR1B. Detected in brain neocortex and caudate nucleus (at protein level).

It is found in the cell membrane. Its function is as follows. G-protein coupled receptor for 5-hydroxytryptamine (serotonin). Also functions as a receptor for ergot alkaloid derivatives, various anxiolytic and antidepressant drugs and other psychoactive substances. Ligand binding causes a conformation change that triggers signaling via guanine nucleotide-binding proteins (G proteins) and modulates the activity of downstream effectors, such as adenylate cyclase. HTR1D is coupled to G(i)/G(o) G alpha proteins and mediates inhibitory neurotransmission by inhibiting adenylate cyclase activity. Regulates the release of 5-hydroxytryptamine in the brain, and thereby affects neural activity. May also play a role in regulating the release of other neurotransmitters. May play a role in vasoconstriction. This chain is 5-hydroxytryptamine receptor 1D, found in Homo sapiens (Human).